The following is a 343-amino-acid chain: N-acetyl-gamma-glutamyl-phosphate reductase (343 aa).

The active site involves Cys-147.

The protein belongs to the NAGSA dehydrogenase family. Type 1 subfamily.

The protein resides in the cytoplasm. It catalyses the reaction N-acetyl-L-glutamate 5-semialdehyde + phosphate + NADP(+) = N-acetyl-L-glutamyl 5-phosphate + NADPH + H(+). Its pathway is amino-acid biosynthesis; L-arginine biosynthesis; N(2)-acetyl-L-ornithine from L-glutamate: step 3/4. Catalyzes the NADPH-dependent reduction of N-acetyl-5-glutamyl phosphate to yield N-acetyl-L-glutamate 5-semialdehyde. The chain is N-acetyl-gamma-glutamyl-phosphate reductase from Listeria monocytogenes serotype 4b (strain CLIP80459).